The sequence spans 350 residues: Lipoyl synthase, mitochondrial (350 aa).

Positions 83, 88, 94, 113, 117, 120, and 328 each coordinate [4Fe-4S] cluster. Positions 96–317 (GGESGTATAT…EKVGNELGFA (222 aa)) constitute a Radical SAM core domain.

Belongs to the radical SAM superfamily. Lipoyl synthase family. The cofactor is [4Fe-4S] cluster.

Its subcellular location is the mitochondrion. The enzyme catalyses [[Fe-S] cluster scaffold protein carrying a second [4Fe-4S](2+) cluster] + N(6)-octanoyl-L-lysyl-[protein] + 2 oxidized [2Fe-2S]-[ferredoxin] + 2 S-adenosyl-L-methionine + 4 H(+) = [[Fe-S] cluster scaffold protein] + N(6)-[(R)-dihydrolipoyl]-L-lysyl-[protein] + 4 Fe(3+) + 2 hydrogen sulfide + 2 5'-deoxyadenosine + 2 L-methionine + 2 reduced [2Fe-2S]-[ferredoxin]. Its pathway is protein modification; protein lipoylation via endogenous pathway; protein N(6)-(lipoyl)lysine from octanoyl-[acyl-carrier-protein]: step 2/2. Catalyzes the radical-mediated insertion of two sulfur atoms into the C-6 and C-8 positions of the octanoyl moiety bound to the lipoyl domains of lipoate-dependent enzymes, thereby converting the octanoylated domains into lipoylated derivatives. The sequence is that of Lipoyl synthase, mitochondrial from Trichoplax adhaerens (Trichoplax reptans).